A 461-amino-acid polypeptide reads, in one-letter code: Cysteine--tRNA ligase (461 aa).

Zn(2+) is bound at residue cysteine 28. The short motif at 30 to 40 (VTIYDLCHIGH) is the 'HIGH' region element. Zn(2+) is bound by residues cysteine 209, histidine 234, and glutamate 238. Positions 266–270 (KMSKS) match the 'KMSKS' region motif. Lysine 269 is an ATP binding site.

It belongs to the class-I aminoacyl-tRNA synthetase family. Monomer. Zn(2+) is required as a cofactor.

It is found in the cytoplasm. The catalysed reaction is tRNA(Cys) + L-cysteine + ATP = L-cysteinyl-tRNA(Cys) + AMP + diphosphate. In Edwardsiella ictaluri (strain 93-146), this protein is Cysteine--tRNA ligase.